The sequence spans 467 residues: Probable citrate synthase 1, mitochondrial (467 aa).

Catalysis depends on residues His303, His349, and Asp404.

It belongs to the citrate synthase family. As to quaternary structure, homodimer.

The protein localises to the mitochondrion matrix. It carries out the reaction oxaloacetate + acetyl-CoA + H2O = citrate + CoA + H(+). It participates in carbohydrate metabolism; tricarboxylic acid cycle; isocitrate from oxaloacetate: step 1/2. This chain is Probable citrate synthase 1, mitochondrial, found in Aedes aegypti (Yellowfever mosquito).